The sequence spans 116 residues: RNA guanine-N7 methyltransferase activating subunit (116 aa).

The interaction with RNMT stretch occupies residues 1 to 55 (MAEALGAQELYEKMFEQRFTANDKEYQEYLKREQDQPPIVEDWKMGNQRNTDRYR). A disordered region spans residues 31–116 (KREQDQPPIV…SNQRFHSDRY (86 aa)). The RNMT-activating domain motif lies at 36 to 42 (QPPIVED). The tract at residues 56 to 116 (DNRHHRGWDG…SNQRFHSDRY (61 aa)) is RNA-binding. Over residues 67–78 (QNWSSNSYNQSY) the composition is skewed to low complexity. Over residues 97–110 (YQQGHYTHNPSNQR) the composition is skewed to polar residues.

The protein belongs to the RAM family.

It is found in the nucleus. In terms of biological role, regulatory subunit of the mRNA-capping methyltransferase RNMT:RAMAC complex that methylates the N7 position of the added guanosine to the 5'-cap structure of mRNAs. Promotes the recruitment of the methyl donor, S-adenosyl-L-methionine, to RNMT. Regulates RNMT expression by a post-transcriptional stabilizing mechanism. Binds RNA. The sequence is that of RNA guanine-N7 methyltransferase activating subunit (ramac) from Xenopus tropicalis (Western clawed frog).